Reading from the N-terminus, the 137-residue chain is MNHTSQAFVNAATGGQPPNYERIKEEYEVSELGAPHGSASVRTTVINMPREVSVPDHVVWSLFNTLFMNFCCLGFIAYAYSVKSRDRKMVGDMTGAQAYASTAKCLNISSLVLSILMVIITIVTVVIIALNAPRLQT.

At 1-57 (MNHTSQAFVNAATGGQPPNYERIKEEYEVSELGAPHGSASVRTTVINMPREVSVPDH) the chain is on the cytoplasmic side. A Phosphotyrosine modification is found at Tyr-20. A Glycyl lysine isopeptide (Lys-Gly) (interchain with G-Cter in ubiquitin) cross-link involves residue Lys-24. Tyr-27 is modified (phosphotyrosine). The helical intramembrane region spans 58 to 78 (VVWSLFNTLFMNFCCLGFIAY). Positions 60-93 (WSLFNTLFMNFCCLGFIAYAYSVKSRDRKMVGDM) are interaction with SPP1. S-palmitoyl cysteine attachment occurs at residues Cys-71 and Cys-72. The Cytoplasmic segment spans residues 79–109 (AYSVKSRDRKMVGDMTGAQAYASTAKCLNIS). Residues Lys-83, Lys-88, and Lys-104 each participate in a glycyl lysine isopeptide (Lys-Gly) (interchain with G-Cter in ubiquitin) cross-link. Residue Cys-105 is the site of S-palmitoyl cysteine attachment. The interaction with VAPA stretch occupies residues 108–133 (ISSLVLSILMVIITIVTVVIIALNAP). Residues 110–130 (SLVLSILMVIITIVTVVIIAL) traverse the membrane as a helical segment. Over 131 to 137 (NAPRLQT) the chain is Extracellular.

It belongs to the CD225/Dispanin family. Interacts with ATP6V0B. Interacts with CD81. Interacts with SPP1; the interaction reduces OPN expression. Interacts with BRI3. Post-translationally, polyubiquitinated with both 'Lys-48' and 'Lys-63' linkages. Ubiquitination negatively regulates antiviral activity. Lys-24 is the most prevalent ubiquitination site. In terms of processing, phosphorylation at Tyr-20 is required for endosomal and lysosomal location.

The protein resides in the cell membrane. Its subcellular location is the late endosome membrane. The protein localises to the early endosome membrane. It is found in the lysosome membrane. It localises to the cytoplasm. The protein resides in the perinuclear region. IFN-induced antiviral protein which disrupts intracellular cholesterol homeostasis. Inhibits the entry of viruses to the host cell cytoplasm by preventing viral fusion with cholesterol depleted endosomes. May inactivate new enveloped viruses which buds out of the infected cell, by letting them go out with a cholesterol depleted membrane. Active against multiple viruses. Plays a critical role in the structural stability and function of vacuolar ATPase (v-ATPase). Establishes physical contact with the v-ATPase of endosomes which is critical for proper clathrin localization and is also required for the function of the v-ATPase to lower the pH in phagocytic endosomes thus establishing an antiviral state. The sequence is that of Interferon-induced transmembrane protein 3 from Rattus norvegicus (Rat).